We begin with the raw amino-acid sequence, 352 residues long: Photosystem II D2 protein (352 aa).

At T2 the chain carries N-acetylthreonine. T2 carries the phosphothreonine modification. Residues 40–60 form a helical membrane-spanning segment; that stretch reads CAYFALGGWLTGTTFVSSWYT. H117 lines the chlorophyll a pocket. Residues 124 to 140 form a helical membrane-spanning segment; it reads GFMLRQFEIARAVQIRP. Pheophytin a is bound by residues Q129 and N142. Residues 152–165 form a helical membrane-spanning segment; sequence VFVSVFLIYPLGQS. H197 lines the chlorophyll a pocket. Residues 207-227 traverse the membrane as a helical segment; the sequence is AALLCAIHGATVENTLFEDGD. Positions 214 and 261 each coordinate a plastoquinone. Residue H214 coordinates Fe cation. H268 provides a ligand contact to Fe cation. Residues 278 to 294 form a helical membrane-spanning segment; sequence GLWMSALGVVGLALNLR.

It belongs to the reaction center PufL/M/PsbA/D family. PSII is composed of 1 copy each of membrane proteins PsbA, PsbB, PsbC, PsbD, PsbE, PsbF, PsbH, PsbI, PsbJ, PsbK, PsbL, PsbM, PsbT, PsbX, PsbY, PsbZ, Psb30/Ycf12, at least 3 peripheral proteins of the oxygen-evolving complex and a large number of cofactors. It forms dimeric complexes. Requires The D1/D2 heterodimer binds P680, chlorophylls that are the primary electron donor of PSII, and subsequent electron acceptors. It shares a non-heme iron and each subunit binds pheophytin, quinone, additional chlorophylls, carotenoids and lipids. There is also a Cl(-1) ion associated with D1 and D2, which is required for oxygen evolution. The PSII complex binds additional chlorophylls, carotenoids and specific lipids. as cofactor.

It localises to the plastid. The protein localises to the chloroplast thylakoid membrane. The catalysed reaction is 2 a plastoquinone + 4 hnu + 2 H2O = 2 a plastoquinol + O2. In terms of biological role, photosystem II (PSII) is a light-driven water:plastoquinone oxidoreductase that uses light energy to abstract electrons from H(2)O, generating O(2) and a proton gradient subsequently used for ATP formation. It consists of a core antenna complex that captures photons, and an electron transfer chain that converts photonic excitation into a charge separation. The D1/D2 (PsbA/PsbD) reaction center heterodimer binds P680, the primary electron donor of PSII as well as several subsequent electron acceptors. D2 is needed for assembly of a stable PSII complex. In Ostreococcus tauri, this protein is Photosystem II D2 protein.